Here is a 106-residue protein sequence, read N- to C-terminus: Large ribosomal subunit protein uL24 (106 aa).

The protein belongs to the universal ribosomal protein uL24 family. Part of the 50S ribosomal subunit.

Functionally, one of two assembly initiator proteins, it binds directly to the 5'-end of the 23S rRNA, where it nucleates assembly of the 50S subunit. In terms of biological role, one of the proteins that surrounds the polypeptide exit tunnel on the outside of the subunit. This Rhodospirillum rubrum (strain ATCC 11170 / ATH 1.1.1 / DSM 467 / LMG 4362 / NCIMB 8255 / S1) protein is Large ribosomal subunit protein uL24.